Consider the following 154-residue polypeptide: MVLSDAEWQLVLNIWAKVEADVAGHGQDILIRLFKGHPETLEKFDKFKHLKTEAEMKASEDLKKHGNTVLTALGGILKKKGHHEAELKPLAQSHATKHKIPIKYLEFISDAIIHVLHSRHPGDFGADAQAAMNKALELFRKDIAAKYKELGFQG.

The Globin domain maps to 2 to 148 (VLSDAEWQLV…FRKDIAAKYK (147 aa)). Position 4 is a phosphoserine (S4). A nitrite-binding site is contributed by H65. An O2-binding site is contributed by H65. T68 is subject to Phosphothreonine. Residue H94 participates in heme b binding.

Belongs to the globin family. As to quaternary structure, monomeric.

The protein resides in the cytoplasm. It localises to the sarcoplasm. The catalysed reaction is Fe(III)-heme b-[protein] + nitric oxide + H2O = Fe(II)-heme b-[protein] + nitrite + 2 H(+). The enzyme catalyses H2O2 + AH2 = A + 2 H2O. Functionally, monomeric heme protein which primary function is to store oxygen and facilitate its diffusion within muscle tissues. Reversibly binds oxygen through a pentacoordinated heme iron and enables its timely and efficient release as needed during periods of heightened demand. Depending on the oxidative conditions of tissues and cells, and in addition to its ability to bind oxygen, it also has a nitrite reductase activity whereby it regulates the production of bioactive nitric oxide. Under stress conditions, like hypoxia and anoxia, it also protects cells against reactive oxygen species thanks to its pseudoperoxidase activity. This Eschrichtius robustus (California gray whale) protein is Myoglobin (MB).